The sequence spans 188 residues: Adenine phosphoribosyltransferase (188 aa).

This sequence belongs to the purine/pyrimidine phosphoribosyltransferase family. As to quaternary structure, homodimer.

The protein localises to the cytoplasm. The enzyme catalyses AMP + diphosphate = 5-phospho-alpha-D-ribose 1-diphosphate + adenine. The protein operates within purine metabolism; AMP biosynthesis via salvage pathway; AMP from adenine: step 1/1. Its function is as follows. Catalyzes a salvage reaction resulting in the formation of AMP, that is energically less costly than de novo synthesis. This Salinispora arenicola (strain CNS-205) protein is Adenine phosphoribosyltransferase.